Here is a 312-residue protein sequence, read N- to C-terminus: Acetaldehyde dehydrogenase (312 aa).

Residue 12–15 (SGNI) participates in NAD(+) binding. Catalysis depends on cysteine 132, which acts as the Acyl-thioester intermediate. NAD(+) is bound by residues 163–171 (SAGPGTRAN) and asparagine 290.

Belongs to the acetaldehyde dehydrogenase family. In terms of assembly, heterotetramer composed of two DmpG (aldolase) and two DmpF (dehydrogenase) subunits, which allows a direct channeling of acetaldehyde between the two active sites.

It carries out the reaction acetaldehyde + NAD(+) + CoA = acetyl-CoA + NADH + H(+). The protein operates within aromatic compound metabolism; phenol degradation. With respect to regulation, is not activated by Mn(2+), Mg(2+), Ca(2+), Zn(2+) or Co(2+). Its function is as follows. Catalyzes the conversion of acetaldehyde to acetyl-CoA, using NAD(+) and coenzyme A. Can also act on propanal and butanal to form propanoyl-CoA and butanoyl-CoA, respectively. Is the final enzyme in the meta-cleavage pathway for the degradation of aromatic compounds such as phenols, cresols and catechols. NADP(+) can replace NAD(+) but the rate of reaction is much slower. The sequence is that of Acetaldehyde dehydrogenase (dmpF) from Pseudomonas sp. (strain CF600).